Here is a 218-residue protein sequence, read N- to C-terminus: Pyridoxine/pyridoxamine 5'-phosphate oxidase (218 aa).

Residues 14-17 (RREY) and Lys72 each bind substrate. Residues 67–72 (RIVLLK), 82–83 (YT), Arg88, Lys89, and Gln111 contribute to the FMN site. The substrate site is built by Tyr129, Arg133, and Ser137. Residues 146-147 (QS) and Trp191 each bind FMN. A substrate-binding site is contributed by 197–199 (RLH). Residue Arg201 participates in FMN binding.

It belongs to the pyridoxamine 5'-phosphate oxidase family. As to quaternary structure, homodimer. Requires FMN as cofactor.

It catalyses the reaction pyridoxamine 5'-phosphate + O2 + H2O = pyridoxal 5'-phosphate + H2O2 + NH4(+). The catalysed reaction is pyridoxine 5'-phosphate + O2 = pyridoxal 5'-phosphate + H2O2. The protein operates within cofactor metabolism; pyridoxal 5'-phosphate salvage; pyridoxal 5'-phosphate from pyridoxamine 5'-phosphate: step 1/1. It participates in cofactor metabolism; pyridoxal 5'-phosphate salvage; pyridoxal 5'-phosphate from pyridoxine 5'-phosphate: step 1/1. Its function is as follows. Catalyzes the oxidation of either pyridoxine 5'-phosphate (PNP) or pyridoxamine 5'-phosphate (PMP) into pyridoxal 5'-phosphate (PLP). The sequence is that of Pyridoxine/pyridoxamine 5'-phosphate oxidase from Escherichia coli (strain 55989 / EAEC).